A 637-amino-acid chain; its full sequence is 1-deoxy-D-xylulose-5-phosphate synthase (637 aa).

Thiamine diphosphate is bound by residues histidine 71 and serine 112–alanine 114. Aspartate 144 provides a ligand contact to Mg(2+). Thiamine diphosphate contacts are provided by residues glycine 145–alanine 146, asparagine 173, tyrosine 284, and glutamate 365. A Mg(2+)-binding site is contributed by asparagine 173.

The protein belongs to the transketolase family. DXPS subfamily. In terms of assembly, homodimer. Mg(2+) is required as a cofactor. Requires thiamine diphosphate as cofactor.

The enzyme catalyses D-glyceraldehyde 3-phosphate + pyruvate + H(+) = 1-deoxy-D-xylulose 5-phosphate + CO2. Its pathway is metabolic intermediate biosynthesis; 1-deoxy-D-xylulose 5-phosphate biosynthesis; 1-deoxy-D-xylulose 5-phosphate from D-glyceraldehyde 3-phosphate and pyruvate: step 1/1. Catalyzes the acyloin condensation reaction between C atoms 2 and 3 of pyruvate and glyceraldehyde 3-phosphate to yield 1-deoxy-D-xylulose-5-phosphate (DXP). The chain is 1-deoxy-D-xylulose-5-phosphate synthase from Mycobacterium ulcerans (strain Agy99).